The primary structure comprises 338 residues: Sesquiterpene synthase 2 (338 aa).

4 residues coordinate Mg(2+): aspartate 93, asparagine 228, serine 232, and glutamate 236. The short motif at 93-97 is the DDXXD motif element; the sequence is DNISD. The NSE/DTE motif motif lies at 228-236; it reads NDIFSYNVE. 2 residues coordinate (2E,6E)-farnesyl diphosphate: arginine 316 and tyrosine 317.

The protein belongs to the terpene synthase family. It depends on Mg(2+) as a cofactor.

The catalysed reaction is (2E,6E)-farnesyl diphosphate = alpha-copaene + diphosphate. It catalyses the reaction (2E,6E)-farnesyl diphosphate = beta-copaene + diphosphate. The enzyme catalyses (2E,6E)-farnesyl diphosphate = alpha-muurolene + diphosphate. It carries out the reaction (2E,6E)-farnesyl diphosphate = gamma-muurolene + diphosphate. The catalysed reaction is (2E,6E)-farnesyl diphosphate = delta-cadinene + diphosphate. Terpene cyclase that catalyzes the cyclization of farnesyl diphosphate (FPP) to various sesquiterpenes, including alpha-copaene, beta-copaene, beta-elemene, alpha-muurolene, gamma-muurolene and delta-cadinene. In Postia placenta (strain ATCC 44394 / Madison 698-R) (Brown rot fungus), this protein is Sesquiterpene synthase 2.